The sequence spans 89 residues: Small ribosomal subunit protein uS15 (89 aa).

The protein belongs to the universal ribosomal protein uS15 family. As to quaternary structure, part of the 30S ribosomal subunit. Forms a bridge to the 50S subunit in the 70S ribosome, contacting the 23S rRNA.

Functionally, one of the primary rRNA binding proteins, it binds directly to 16S rRNA where it helps nucleate assembly of the platform of the 30S subunit by binding and bridging several RNA helices of the 16S rRNA. Its function is as follows. Forms an intersubunit bridge (bridge B4) with the 23S rRNA of the 50S subunit in the ribosome. The protein is Small ribosomal subunit protein uS15 of Chlamydia felis (strain Fe/C-56) (Chlamydophila felis).